The sequence spans 160 residues: 2-amino-4-hydroxy-6-hydroxymethyldihydropteridine pyrophosphokinase (160 aa).

This sequence belongs to the HPPK family. Monomer.

It catalyses the reaction 6-hydroxymethyl-7,8-dihydropterin + ATP = (7,8-dihydropterin-6-yl)methyl diphosphate + AMP + H(+). It functions in the pathway cofactor biosynthesis; tetrahydrofolate biosynthesis; 2-amino-4-hydroxy-6-hydroxymethyl-7,8-dihydropteridine diphosphate from 7,8-dihydroneopterin triphosphate: step 4/4. Functionally, catalyzes the transfer of pyrophosphate from adenosine triphosphate (ATP) to 6-hydroxymethyl-7,8-dihydropterin, an enzymatic step in folate biosynthesis pathway. In Haemophilus influenzae (strain ATCC 51907 / DSM 11121 / KW20 / Rd), this protein is 2-amino-4-hydroxy-6-hydroxymethyldihydropteridine pyrophosphokinase (folK).